Here is a 587-residue protein sequence, read N- to C-terminus: Prolycopene isomerase 2, chloroplastic (587 aa).

The transit peptide at 1–50 (MLCLSLNSSSTSPPKLPLHHSFSRRGIRSWVRSPCVQRKKLGFWSSPKAV) directs the protein to the chloroplast.

Belongs to the carotenoid/retinoid oxidoreductase family. CrtISO subfamily. The cofactor is NAD(+). Requires NADP(+) as cofactor. FAD is required as a cofactor. As to expression, up-regulated in the flower buds and flower lip tissue, while it is weakly expressed in leaves.

The protein localises to the plastid. It localises to the chloroplast membrane. It catalyses the reaction 7,7',9,9'-tetra-cis-lycopene = all-trans-lycopene. It functions in the pathway carotenoid biosynthesis; lycopene biosynthesis. Functionally, carotene cis-trans-isomerase that converts 7,9,9'-tri-cis-neurosporene to 9'-cis-neurosporene and 7,9,9',7'-tetra-cis-lycopene (also known as prolycopene) into all-trans-lycopene. Isomerization requires redox-active components, suggesting that isomerization is achieved by a reversible redox reaction acting at specific double bonds. Isomerizes adjacent cis-double bonds at C7 and C9 pairwise into the trans-configuration, but is incapable of isomerizing single cis-double bonds at C9 and C9'. The sequence is that of Prolycopene isomerase 2, chloroplastic (CRTISO2) from Oncidium hybrid cultivar (Orchid).